Here is a 194-residue protein sequence, read N- to C-terminus: Peptidyl-tRNA hydrolase (194 aa).

TRNA is bound at residue Tyr-16. His-21 (proton acceptor) is an active-site residue. Residues Phe-66, Asn-68, and Asn-114 each coordinate tRNA.

This sequence belongs to the PTH family. As to quaternary structure, monomer.

The protein resides in the cytoplasm. It catalyses the reaction an N-acyl-L-alpha-aminoacyl-tRNA + H2O = an N-acyl-L-amino acid + a tRNA + H(+). Hydrolyzes ribosome-free peptidyl-tRNAs (with 1 or more amino acids incorporated), which drop off the ribosome during protein synthesis, or as a result of ribosome stalling. Functionally, catalyzes the release of premature peptidyl moieties from peptidyl-tRNA molecules trapped in stalled 50S ribosomal subunits, and thus maintains levels of free tRNAs and 50S ribosomes. The polypeptide is Peptidyl-tRNA hydrolase (Geobacter metallireducens (strain ATCC 53774 / DSM 7210 / GS-15)).